The primary structure comprises 369 residues: DNA replication and repair protein RecF (369 aa).

Residue 30-37 (GQNGMGKT) participates in ATP binding.

This sequence belongs to the RecF family.

It localises to the cytoplasm. Its function is as follows. The RecF protein is involved in DNA metabolism; it is required for DNA replication and normal SOS inducibility. RecF binds preferentially to single-stranded, linear DNA. It also seems to bind ATP. This is DNA replication and repair protein RecF from Bacteroides thetaiotaomicron (strain ATCC 29148 / DSM 2079 / JCM 5827 / CCUG 10774 / NCTC 10582 / VPI-5482 / E50).